We begin with the raw amino-acid sequence, 501 residues long: Solute carrier family 2, facilitated glucose transporter member 5 (501 aa).

Met1 is modified (N-acetylmethionine). The Cytoplasmic segment spans residues 1–18; sequence MEQQDQSMKEGRLTLVLA. Residues 19–39 form a helical membrane-spanning segment; that stretch reads LATLIAAFGSSFQYGYNVAAV. Tyr32 provides a ligand contact to D-fructose. Residues 40-68 lie on the Extracellular side of the membrane; sequence NSPALLMQQFYNETYYGRTGEFMEDFPLT. N-linked (GlcNAc...) asparagine glycosylation occurs at Asn51. A helical transmembrane segment spans residues 69–91; that stretch reads LLWSVTVSMFPFGGFIGSLLVGP. At 92–98 the chain is on the cytoplasmic side; it reads LVNKFGR. Residues 99–119 traverse the membrane as a helical segment; the sequence is KGALLFNNIFSIVPAILMGCS. The Extracellular portion of the chain corresponds to 120–126; that stretch reads RVATSFE. A helical membrane pass occupies residues 127-149; the sequence is LIIISRLLVGICAGVSSNVVPMY. Over 150–161 the chain is Cytoplasmic; that stretch reads LGELAPKNLRGA. The chain crosses the membrane as a helical span at residues 162 to 182; that stretch reads LGVVPQLFITVGILVAQIFGL. Residue Gln167 coordinates D-fructose. The Extracellular portion of the chain corresponds to 183–192; that stretch reads RNLLANVDGW. The helical transmembrane segment at 193 to 213 threads the bilayer; it reads PILLGLTGVPAALQLLLLPFF. The Cytoplasmic segment spans residues 214 to 277; sequence PESPRYLLIQ…LFRMRSLRWQ (64 aa). Residues 278–298 form a helical membrane-spanning segment; sequence LLSIIVLMGGQQLSGVNAIYY. D-fructose contacts are provided by residues Gln288 and 296–298; that span reads IYY. Topologically, residues 299-313 are extracellular; that stretch reads YADQIYLSAGVPEEH. A helical transmembrane segment spans residues 314–334; the sequence is VQYVTAGTGAVNVVMTFCAVF. Topologically, residues 335 to 342 are cytoplasmic; that stretch reads VVELLGRR. The helical transmembrane segment at 343-363 threads the bilayer; it reads LLLLLGFSICLIACCVLTAAL. Residues 364 to 371 lie on the Extracellular side of the membrane; it reads ALQDTVSW. Residues 372–394 form a helical membrane-spanning segment; it reads MPYISIVCVISYVIGHALGPSPI. His387 contributes to the D-fructose binding site. Topologically, residues 395 to 412 are cytoplasmic; that stretch reads PALLITEIFLQSSRPSAF. Residues 413 to 433 traverse the membrane as a helical segment; sequence MVGGSVHWLSNFTVGLIFPFI. Residue 419-420 coordinates D-fructose; it reads HW. The Extracellular portion of the chain corresponds to 434–439; that stretch reads QEGLGP. Residues 440–460 traverse the membrane as a helical segment; that stretch reads YSFIVFAVICLLTTIYIFLIV. At 461-501 the chain is on the cytoplasmic side; that stretch reads PETKAKTFIEINQIFTKMNKVSEVYPEKEELKELPPVTSEQ.

As to expression, detected in skeletal muscle, and in jejunum brush border membrane and basolateral membrane (at protein level). Expressed in small intestine, and at much lower levels in kidney, skeletal muscle, and adipose tissue.

Its subcellular location is the apical cell membrane. It is found in the cell membrane. It localises to the sarcolemma. The catalysed reaction is D-fructose(out) = D-fructose(in). Its activity is regulated as follows. The uptake of 2-deoxyglucose is inhibited by cytochalasin B. Fructose transport is inhibited by the flavonoids epigallocatechin gallate and apigenin but not quercetin. In terms of biological role, functions as a fructose transporter that has only low activity with other monosaccharides. Can mediate the uptake of 2-deoxyglucose, but with low efficiency. Essential for fructose uptake in the small intestine. Plays a role in the regulation of salt uptake and blood pressure in response to dietary fructose. Required for the development of high blood pressure in response to high dietary fructose intake. In Homo sapiens (Human), this protein is Solute carrier family 2, facilitated glucose transporter member 5.